We begin with the raw amino-acid sequence, 296 residues long: CRISPR-associated endonuclease Cas1 2 (296 aa).

Glutamate 157, histidine 224, and aspartate 237 together coordinate Mn(2+).

This sequence belongs to the CRISPR-associated endonuclease Cas1 family. As to quaternary structure, homodimer, forms a heterotetramer with a Cas2 homodimer. Mg(2+) is required as a cofactor. It depends on Mn(2+) as a cofactor.

CRISPR (clustered regularly interspaced short palindromic repeat), is an adaptive immune system that provides protection against mobile genetic elements (viruses, transposable elements and conjugative plasmids). CRISPR clusters contain spacers, sequences complementary to antecedent mobile elements, and target invading nucleic acids. CRISPR clusters are transcribed and processed into CRISPR RNA (crRNA). Acts as a dsDNA endonuclease. Involved in the integration of spacer DNA into the CRISPR cassette. The sequence is that of CRISPR-associated endonuclease Cas1 2 from Chlorobaculum tepidum (strain ATCC 49652 / DSM 12025 / NBRC 103806 / TLS) (Chlorobium tepidum).